Here is a 468-residue protein sequence, read N- to C-terminus: ERO1-like protein alpha (468 aa).

The N-terminal stretch at 1 to 23 (MGRGWGFLFGLLGAVWLLSSGHG) is a signal peptide. 8 disulfide bridges follow: C35-C48, C37-C46, C85-C391, C94-C99, C94-C131, C99-C104, C208-C241, and C394-C397. Phosphoserine occurs at positions 106 and 143. S145 carries the post-translational modification Phosphoserine; by FAM20C. Residues R187, T189, and W200 each contribute to the FAD site. 2 residues coordinate FAD: S252 and H255. N-linked (GlcNAc...) asparagine glycosylation is present at N280. R287 and R300 together coordinate FAD. N384 is a glycosylation site (N-linked (GlcNAc...) asparagine).

It belongs to the EROs family. As to quaternary structure, predominantly monomer. May function both as a monomer and a homodimer. Interacts with PDILT. Interacts with ERP44; the interaction results in retention of ERO1A in the endoplasmic reticulum. FAD serves as cofactor. N-glycosylated. In terms of processing, the Cys-94/Cys-99 and Cys-394/Cys-397 disulfide bonds constitute the redox-active center. The Cys-94/Cys-99 disulfide bond may accept electron from P4HB and funnel them to the active site disulfide Cys-394/Cys-397. The regulatory Cys-99/Cys-104 disulfide bond stabilizes the other regulatory bond Cys-94/Cys-131. Post-translationally, phosphorylated on Ser-145 by FAM20C in the Golgi which increases its enzymatic activity. Phosphorylation is induced by lactation. It is also induced by hypoxia and reductive stress. Widely expressed at low level. Expressed at high level in upper digestive tract. Highly expressed in esophagus. Weakly expressed in stomach and duodenum.

It localises to the endoplasmic reticulum membrane. The protein resides in the golgi apparatus lumen. Its subcellular location is the secreted. It is found in the cell projection. The protein localises to the dendrite. Its activity is regulated as follows. Enzyme activity is tightly regulated to prevent the accumulation of reactive oxygen species in the endoplasmic reticulum. Reversibly down-regulated by the formation of disulfide bonds between the active site Cys-94 and Cys-131, and between Cys-99 and Cys-104. Glutathione may be required to regulate its activity in the endoplasmic reticulum. In terms of biological role, oxidoreductase involved in disulfide bond formation in the endoplasmic reticulum. Efficiently reoxidizes P4HB/PDI, the enzyme catalyzing protein disulfide formation, in order to allow P4HB to sustain additional rounds of disulfide formation. Following P4HB reoxidation, passes its electrons to molecular oxygen via FAD, leading to the production of reactive oxygen species (ROS) in the cell. Required for the proper folding of immunoglobulins. Plays an important role in ER stress-induced, CHOP-dependent apoptosis by activating the inositol 1,4,5-trisphosphate receptor IP3R1. Involved in the release of the unfolded cholera toxin from reduced P4HB/PDI in case of infection by V.cholerae, thereby playing a role in retrotranslocation of the toxin. The sequence is that of ERO1-like protein alpha from Homo sapiens (Human).